Reading from the N-terminus, the 66-residue chain is Large ribosomal subunit protein uL29 (66 aa).

Belongs to the universal ribosomal protein uL29 family.

The chain is Large ribosomal subunit protein uL29 from Helicobacter pylori (strain Shi470).